Here is a 104-residue protein sequence, read N- to C-terminus: Integration host factor subunit beta (104 aa).

Residues 83–95 show a composition bias toward basic and acidic residues; the sequence is GKEMRERLNRDSG. The interval 83-104 is disordered; the sequence is GKEMRERLNRDSGDDAPTSDTA.

It belongs to the bacterial histone-like protein family. Heterodimer of an alpha and a beta chain.

In terms of biological role, this protein is one of the two subunits of integration host factor, a specific DNA-binding protein that functions in genetic recombination as well as in transcriptional and translational control. The sequence is that of Integration host factor subunit beta from Rhodopseudomonas palustris (strain ATCC BAA-98 / CGA009).